Consider the following 80-residue polypeptide: MEYASDQLLPRDMQILFPTIYCRLNAINYCQYLKTFLVQRAQPAACDHTLVLESKVDTVRQVLRKIVSTDAVFSEARARP.

This sequence belongs to the herpesviridae TRM2 protein family. As to quaternary structure, associates with TRM1 and TRM3 to form the tripartite terminase complex.

It is found in the host nucleus. Its function is as follows. Component of the molecular motor that translocates viral genomic DNA in empty capsid during DNA packaging. Forms a tripartite terminase complex together with TRM1 and TRM3 in the host cytoplasm. Once the complex reaches the host nucleus, it interacts with the capsid portal vertex. This portal forms a ring in which genomic DNA is translocated into the capsid. This Homo sapiens (Human) protein is Tripartite terminase subunit 2.